The sequence spans 78 residues: Conotoxin ArMKLT2-0313 (78 aa).

The N-terminal stretch at 1 to 22 (MKLTCVLIIAVLCLTVCQLITA) is a signal peptide. Positions 23 to 47 (DYLRDKQKYRSVRLRDGMLNFKGSR) are excised as a propeptide. A Pyrrolidone carboxylic acid modification is found at glutamine 48. Intrachain disulfides connect cysteine 49-cysteine 62, cysteine 56-cysteine 67, and cysteine 61-cysteine 75.

It belongs to the conotoxin O1 superfamily. In terms of tissue distribution, expressed by the venom duct.

It is found in the secreted. The polypeptide is Conotoxin ArMKLT2-0313 (Conus arenatus (Sand-dusted cone)).